The following is a 454-amino-acid chain: Phosphoglucosamine mutase (454 aa).

Residue Ser-104 is the Phosphoserine intermediate of the active site. Residues Ser-104, Asp-244, Asp-246, and Asp-248 each coordinate Mg(2+). Ser-104 bears the Phosphoserine mark.

It belongs to the phosphohexose mutase family. Mg(2+) is required as a cofactor. Activated by phosphorylation.

The catalysed reaction is alpha-D-glucosamine 1-phosphate = D-glucosamine 6-phosphate. In terms of biological role, catalyzes the conversion of glucosamine-6-phosphate to glucosamine-1-phosphate. The chain is Phosphoglucosamine mutase from Lacticaseibacillus paracasei (strain ATCC 334 / BCRC 17002 / CCUG 31169 / CIP 107868 / KCTC 3260 / NRRL B-441) (Lactobacillus paracasei).